Consider the following 345-residue polypeptide: Uroporphyrinogen decarboxylase (345 aa).

Residues 26–30 (RQAGR), D76, Y151, S205, and H321 each bind substrate.

Belongs to the uroporphyrinogen decarboxylase family. In terms of assembly, homodimer.

It is found in the cytoplasm. The catalysed reaction is uroporphyrinogen III + 4 H(+) = coproporphyrinogen III + 4 CO2. The protein operates within porphyrin-containing compound metabolism; protoporphyrin-IX biosynthesis; coproporphyrinogen-III from 5-aminolevulinate: step 4/4. Catalyzes the decarboxylation of four acetate groups of uroporphyrinogen-III to yield coproporphyrinogen-III. The sequence is that of Uroporphyrinogen decarboxylase from Phenylobacterium zucineum (strain HLK1).